We begin with the raw amino-acid sequence, 178 residues long: MDKKTQALVEQYAKSLVEIAIEKDSLAELQSETEALLSVFEETNLADFLSSLVVSRDEKVKLVRLLQESSSVYMNNFLEVILQNEREAFLKAILEGVQKDFVIATNQHDIVVTTAVALTDEQKERILALVAEKFGVKAGKLVENIDESILGGFVINVNNKVIDTSIRRQLQEFKMNLK.

The protein belongs to the ATPase delta chain family. F-type ATPases have 2 components, F(1) - the catalytic core - and F(0) - the membrane proton channel. F(1) has five subunits: alpha(3), beta(3), gamma(1), delta(1), epsilon(1). F(0) has three main subunits: a(1), b(2) and c(10-14). The alpha and beta chains form an alternating ring which encloses part of the gamma chain. F(1) is attached to F(0) by a central stalk formed by the gamma and epsilon chains, while a peripheral stalk is formed by the delta and b chains.

It localises to the cell membrane. Functionally, f(1)F(0) ATP synthase produces ATP from ADP in the presence of a proton or sodium gradient. F-type ATPases consist of two structural domains, F(1) containing the extramembraneous catalytic core and F(0) containing the membrane proton channel, linked together by a central stalk and a peripheral stalk. During catalysis, ATP synthesis in the catalytic domain of F(1) is coupled via a rotary mechanism of the central stalk subunits to proton translocation. Its function is as follows. This protein is part of the stalk that links CF(0) to CF(1). It either transmits conformational changes from CF(0) to CF(1) or is implicated in proton conduction. This Streptococcus equinus (Streptococcus bovis) protein is ATP synthase subunit delta.